A 347-amino-acid polypeptide reads, in one-letter code: Quinolinate synthase (347 aa).

Residues His-47 and Ser-68 each contribute to the iminosuccinate site. Cys-113 contacts [4Fe-4S] cluster. Residues Tyr-139–Asn-141 and Ser-156 each bind iminosuccinate. Position 200 (Cys-200) interacts with [4Fe-4S] cluster. Residues His-226 to Glu-228 and Thr-243 each bind iminosuccinate. Cys-297 is a binding site for [4Fe-4S] cluster.

It belongs to the quinolinate synthase family. Type 1 subfamily. It depends on [4Fe-4S] cluster as a cofactor.

Its subcellular location is the cytoplasm. The catalysed reaction is iminosuccinate + dihydroxyacetone phosphate = quinolinate + phosphate + 2 H2O + H(+). It participates in cofactor biosynthesis; NAD(+) biosynthesis; quinolinate from iminoaspartate: step 1/1. Its function is as follows. Catalyzes the condensation of iminoaspartate with dihydroxyacetone phosphate to form quinolinate. This Escherichia coli O157:H7 protein is Quinolinate synthase.